Reading from the N-terminus, the 255-residue chain is 5-oxoprolinase subunit A 1 (255 aa).

This sequence belongs to the LamB/PxpA family. As to quaternary structure, forms a complex composed of PxpA, PxpB and PxpC.

The enzyme catalyses 5-oxo-L-proline + ATP + 2 H2O = L-glutamate + ADP + phosphate + H(+). Catalyzes the cleavage of 5-oxoproline to form L-glutamate coupled to the hydrolysis of ATP to ADP and inorganic phosphate. In Agrobacterium fabrum (strain C58 / ATCC 33970) (Agrobacterium tumefaciens (strain C58)), this protein is 5-oxoprolinase subunit A 1.